The following is a 420-amino-acid chain: Phosphoglycerate kinase (420 aa).

Residues V26, D27, Y28, N29, Q42, R43, S66, H67, G69, R70, L125, R126, H173, and R174 each coordinate (2R)-3-phosphoglycerate. Phosphotyrosine is present on Y199. S206 carries the post-translational modification Phosphoserine. The calmodulin binding stretch occupies residues 209-228 (KPFLAILGGAKVSDKIKLIE). G217 is a binding site for ADP. A CDP-binding site is contributed by G217. AMP contacts are provided by A218 and K219. A218 contacts ATP. A Mg(2+)-binding site is contributed by A218. D222 is a binding site for CDP. D222 provides a ligand contact to Mg(2+). Residue K223 participates in AMP binding. K223 is a binding site for ATP. Residue G241 participates in ADP binding. G241 lines the CDP pocket. Residues G242 and G316 each coordinate AMP. G242 and G316 together coordinate ATP. CDP is bound by residues G341 and F346. Residue F346 participates in ADP binding. Residue E347 participates in AMP binding. The ATP site is built by E347, D378, and T379. D378 serves as a coordination point for Mg(2+). S393 is modified (phosphoserine).

Belongs to the phosphoglycerate kinase family. Monomer. Interacts with calmodulin in the presence of Ca(2+). Mg(2+) is required as a cofactor.

Its subcellular location is the cytoplasm. It carries out the reaction (2R)-3-phosphoglycerate + ATP = (2R)-3-phospho-glyceroyl phosphate + ADP. It participates in carbohydrate degradation; glycolysis; pyruvate from D-glyceraldehyde 3-phosphate: step 2/5. The sequence is that of Phosphoglycerate kinase from Dictyostelium discoideum (Social amoeba).